The following is a 268-amino-acid chain: Large ribosomal subunit protein mL46 (268 aa).

The N-terminal 25 residues, 1–25 (MYLKRNIINMQRSFSRQFHISVRNS), are a transit peptide targeting the mitochondrion.

This sequence belongs to the mitochondrion-specific ribosomal protein mL46 family. As to quaternary structure, component of the mitochondrial large ribosomal subunit (mt-LSU). Mature yeast 74S mitochondrial ribosomes consist of a small (37S) and a large (54S) subunit. The 37S small subunit contains a 15S ribosomal RNA (15S mt-rRNA) and at least 32 different proteins. The 54S large subunit contains a 21S rRNA (21S mt-rRNA) and at least 45 different proteins.

It localises to the mitochondrion. Component of the mitochondrial ribosome (mitoribosome), a dedicated translation machinery responsible for the synthesis of mitochondrial genome-encoded proteins, including at least some of the essential transmembrane subunits of the mitochondrial respiratory chain. The mitoribosomes are attached to the mitochondrial inner membrane and translation products are cotranslationally integrated into the membrane. In Schizosaccharomyces pombe (strain 972 / ATCC 24843) (Fission yeast), this protein is Large ribosomal subunit protein mL46 (mrpl17).